Reading from the N-terminus, the 519-residue chain is Aldehyde dehydrogenase, mitochondrial (519 aa).

Residues 1-19 constitute a mitochondrion transit peptide; that stretch reads MLRAALSTARRGPRLSRLL. The short motif at 12 to 26 is the SIFI-degron element; sequence GPRLSRLLSAAATSA. Residues K54, K75, K80, and K161 each carry the N6-acetyllysine modification. Position 264 to 269 (264 to 269) interacts with NAD(+); that stretch reads GSTEVG. Residue E287 is the Proton acceptor of the active site. C321 serves as the catalytic Nucleophile. Residues K370, K377, K385, K409, K428, K430, K443, and K453 each carry the N6-acetyllysine modification.

The protein belongs to the aldehyde dehydrogenase family. In terms of assembly, homotetramer. In terms of processing, in response to mitochondrial stress, the precursor protein is ubiquitinated by the SIFI complex in the cytoplasm before mitochondrial import, leading to its degradation. Within the SIFI complex, UBR4 initiates ubiquitin chain that are further elongated or branched by KCMF1.

It is found in the mitochondrion matrix. It carries out the reaction an aldehyde + NAD(+) + H2O = a carboxylate + NADH + 2 H(+). It participates in alcohol metabolism; ethanol degradation; acetate from ethanol: step 2/2. Functionally, required for clearance of cellular formaldehyde, a cytotoxic and carcinogenic metabolite that induces DNA damage. The polypeptide is Aldehyde dehydrogenase, mitochondrial (Aldh2) (Rattus norvegicus (Rat)).